The following is a 725-amino-acid chain: Ophiobolin F synthase (725 aa).

The (7Z)-ophiobola-7,19-dien-3-ol synthase stretch occupies residues 1 to 322 (MEYKYSTIVD…RYHADAKFNE (322 aa)). Mg(2+) is bound by residues D93 and D97. D93 is a binding site for substrate. A DDXXD 1 motif is present at residues 93-97 (DDEID). Substrate-binding positions include 182–185 (RCMD), N226, 230–234 (SYEKE), and 313–314 (RY). Positions 226 to 234 (NDLFSYEKE) match the NSE/DTE motif. The geranylfarnesyl diphosphate synthase stretch occupies residues 323–725 (LQMLRAEHGV…LRMMLELLKV (403 aa)). Residues 362 to 388 (GVNGVNGKRKRSGEETADDARTNGNGI) are disordered. Residues 373–382 (SGEETADDAR) show a composition bias toward basic and acidic residues. Positions 436, 439, and 468 each coordinate isopentenyl diphosphate. D475 and D479 together coordinate Mg(2+). Positions 475-479 (DDIED) match the DDXXD 2 motif. Residue R484 participates in dimethylallyl diphosphate binding. R485 provides a ligand contact to isopentenyl diphosphate. Dimethylallyl diphosphate contacts are provided by K562, T563, Q601, N608, K618, and K628.

The protein in the N-terminal section; belongs to the terpene synthase family. In the C-terminal section; belongs to the FPP/GGPP synthase family. Mg(2+) is required as a cofactor.

The enzyme catalyses isopentenyl diphosphate + (2E,6E)-farnesyl diphosphate = (2E,6E,10E)-geranylgeranyl diphosphate + diphosphate. It catalyses the reaction isopentenyl diphosphate + (2E,6E,10E)-geranylgeranyl diphosphate = (2E,6E,10E,14E)-geranylfarnesyl diphosphate + diphosphate. It carries out the reaction (2E,6E,10E,14E)-geranylfarnesyl diphosphate + H2O = ophiobolin F + diphosphate. The protein operates within secondary metabolite biosynthesis; terpenoid biosynthesis. Its function is as follows. Bifunctional sesterterpene synthase that converts isopentenyl diphosphate (IPP) and dimethylallyl diphosphate (DMAPP) into ophiobolin F. The C-terminal prenyltransferase (PT) domain of AcldOS converts isopentenyl diphosphate and dimethylallyl diphosphate into geranylfarnesyl diphosphate (GFPP), whereas the N-terminal terpene cyclase (TC) domain catalyzes the cyclization of GFPP to ophiobolin F. This is Ophiobolin F synthase from Aspergillus calidoustus.